The sequence spans 178 residues: Disulfide bond formation protein B (178 aa).

The Cytoplasmic portion of the chain corresponds to 1–14 (MLSFFKTLSMGRSG). Residues 15–31 (WLLLAFSALVLELVALY) traverse the membrane as a helical segment. Over 32 to 49 (FQYGMQLQPCVMCVYERV) the chain is Periplasmic. A disulfide bridge links Cys41 with Cys44. The chain crosses the membrane as a helical span at residues 50-65 (ALGGILFAGIIGAIAP). At 66-72 (SSWFFRF) the chain is on the cytoplasmic side. A helical transmembrane segment spans residues 73–90 (LGIIIGLGASVKGFLLAL). Topologically, residues 91-145 (KHVDYQLNPAPWNQCAYLPEFPQTLPLDQWFPYLFKPIGSCSDIQWSFLGFSMAQ) are periplasmic. Cys105 and Cys131 are oxidised to a cystine. The helical transmembrane segment at 146 to 164 (WILVMFAFYSILLAIILIS) threads the bilayer. Over 165-178 (QVKAGKPKHREIFR) the chain is Cytoplasmic.

Belongs to the DsbB family.

The protein resides in the cell inner membrane. Functionally, required for disulfide bond formation in some periplasmic proteins. Acts by oxidizing the DsbA protein. This Mannheimia succiniciproducens (strain KCTC 0769BP / MBEL55E) protein is Disulfide bond formation protein B.